Reading from the N-terminus, the 293-residue chain is Elongation factor Ts (293 aa).

The tract at residues 80–83 (TDFV) is involved in Mg(2+) ion dislocation from EF-Tu.

It belongs to the EF-Ts family.

It localises to the cytoplasm. Its function is as follows. Associates with the EF-Tu.GDP complex and induces the exchange of GDP to GTP. It remains bound to the aminoacyl-tRNA.EF-Tu.GTP complex up to the GTP hydrolysis stage on the ribosome. The protein is Elongation factor Ts of Burkholderia multivorans (strain ATCC 17616 / 249).